We begin with the raw amino-acid sequence, 410 residues long: Translation initiation factor 2 subunit gamma (410 aa).

One can recognise a tr-type G domain in the interval 6–203 (QSEVNIGMVG…AIQEFIPTPK (198 aa)). The interval 15–22 (GHVDHGKT) is G1. 4 residues coordinate Mg(2+): aspartate 18, threonine 22, glycine 43, and serine 45. GTP is bound at residue 18–23 (DHGKTS). Residues 43-47 (GISIR) are G2. 4 residues coordinate Zn(2+): cysteine 58, cysteine 61, cysteine 73, and cysteine 76. The interval 90-93 (DAPG) is G3. GTP contacts are provided by residues 146 to 149 (NKID) and 181 to 183 (SAH). Residues 146–149 (NKID) form a G4 region. The tract at residues 181–183 (SAH) is G5.

It belongs to the TRAFAC class translation factor GTPase superfamily. Classic translation factor GTPase family. EIF2G subfamily. In terms of assembly, heterotrimer composed of an alpha, a beta and a gamma chain. Mg(2+) serves as cofactor.

The enzyme catalyses GTP + H2O = GDP + phosphate + H(+). Its function is as follows. eIF-2 functions in the early steps of protein synthesis by forming a ternary complex with GTP and initiator tRNA. The sequence is that of Translation initiation factor 2 subunit gamma from Methanococcus maripaludis (strain C6 / ATCC BAA-1332).